Consider the following 219-residue polypeptide: U-scoloptoxin(11)-Sm7a (219 aa).

The signal sequence occupies residues 1 to 15 (MYLFLMINYFVLANS).

Belongs to the scoloptoxin-11 family. Post-translationally, contains 8 disulfide bonds. In terms of tissue distribution, expressed by the venom gland.

Its subcellular location is the secreted. This chain is U-scoloptoxin(11)-Sm7a, found in Scolopendra morsitans (Tanzanian blue ringleg centipede).